The primary structure comprises 145 residues: 3-dehydroquinate dehydratase (145 aa).

Tyr-22 acts as the Proton acceptor in catalysis. Residues Asn-71, His-77, and Asp-84 each coordinate substrate. The active-site Proton donor is the His-97. Residues 98-99 and Arg-108 each bind substrate; that span reads LS.

The protein belongs to the type-II 3-dehydroquinase family. In terms of assembly, homododecamer.

The catalysed reaction is 3-dehydroquinate = 3-dehydroshikimate + H2O. The protein operates within metabolic intermediate biosynthesis; chorismate biosynthesis; chorismate from D-erythrose 4-phosphate and phosphoenolpyruvate: step 3/7. Catalyzes a trans-dehydration via an enolate intermediate. The protein is 3-dehydroquinate dehydratase of Francisella philomiragia subsp. philomiragia (strain ATCC 25017 / CCUG 19701 / FSC 153 / O#319-036).